Reading from the N-terminus, the 629-residue chain is Smc-like protein Sph1 (629 aa).

Coiled coils occupy residues 139 to 282 (LETE…LLDD) and 318 to 487 (AETT…NQFD).

This sequence belongs to the Sph1/Sph2 family.

Its subcellular location is the cytoplasm. Functionally, may play a role in a late step of replication. The sequence is that of Smc-like protein Sph1 (sph1) from Halobacterium salinarum (strain ATCC 29341 / DSM 671 / R1).